The sequence spans 161 residues: uncharacterized protein (161 aa).

A helical membrane pass occupies residues 5-25; the sequence is GPTLLSLLAALLVSLGLLLWY.

The protein belongs to the IIV-6 203L/325L family.

The protein localises to the membrane. This is an uncharacterized protein from Invertebrate iridescent virus 3 (IIV-3).